A 104-amino-acid chain; its full sequence is Pyrimidine/purine nucleoside phosphorylase (104 aa).

It belongs to the nucleoside phosphorylase PpnP family.

The enzyme catalyses a purine D-ribonucleoside + phosphate = a purine nucleobase + alpha-D-ribose 1-phosphate. It carries out the reaction adenosine + phosphate = alpha-D-ribose 1-phosphate + adenine. The catalysed reaction is cytidine + phosphate = cytosine + alpha-D-ribose 1-phosphate. It catalyses the reaction guanosine + phosphate = alpha-D-ribose 1-phosphate + guanine. The enzyme catalyses inosine + phosphate = alpha-D-ribose 1-phosphate + hypoxanthine. It carries out the reaction thymidine + phosphate = 2-deoxy-alpha-D-ribose 1-phosphate + thymine. The catalysed reaction is uridine + phosphate = alpha-D-ribose 1-phosphate + uracil. It catalyses the reaction xanthosine + phosphate = alpha-D-ribose 1-phosphate + xanthine. Catalyzes the phosphorolysis of diverse nucleosides, yielding D-ribose 1-phosphate and the respective free bases. Can use uridine, adenosine, guanosine, cytidine, thymidine, inosine and xanthosine as substrates. Also catalyzes the reverse reactions. The chain is Pyrimidine/purine nucleoside phosphorylase from Herminiimonas arsenicoxydans.